Consider the following 302-residue polypeptide: Phospho-N-acetylmuramoyl-pentapeptide-transferase (302 aa).

10 helical membrane passes run 1 to 21 (MIAA…NLFR), 42 to 62 (GTPT…GVLS), 67 to 87 (VILT…FLSI), 101 to 121 (ALLQ…ETAV), 123 to 143 (FFGI…IVIV), 154 to 174 (GLDG…WFFL), 178 to 198 (GFSE…LIFN), 204 to 224 (IFMG…VSVL), 229 to 249 (FYLI…ILQI), and 279 to 299 (IVAV…EVFG).

It belongs to the glycosyltransferase 4 family. MraY subfamily. Mg(2+) is required as a cofactor.

The protein resides in the cell inner membrane. It catalyses the reaction UDP-N-acetyl-alpha-D-muramoyl-L-alanyl-gamma-D-glutamyl-meso-2,6-diaminopimeloyl-D-alanyl-D-alanine + di-trans,octa-cis-undecaprenyl phosphate = di-trans,octa-cis-undecaprenyl diphospho-N-acetyl-alpha-D-muramoyl-L-alanyl-D-glutamyl-meso-2,6-diaminopimeloyl-D-alanyl-D-alanine + UMP. The protein operates within cell wall biogenesis; peptidoglycan biosynthesis. In terms of biological role, catalyzes the initial step of the lipid cycle reactions in the biosynthesis of the cell wall peptidoglycan: transfers peptidoglycan precursor phospho-MurNAc-pentapeptide from UDP-MurNAc-pentapeptide onto the lipid carrier undecaprenyl phosphate, yielding undecaprenyl-pyrophosphoryl-MurNAc-pentapeptide, known as lipid I. This is Phospho-N-acetylmuramoyl-pentapeptide-transferase from Thermotoga neapolitana (strain ATCC 49049 / DSM 4359 / NBRC 107923 / NS-E).